We begin with the raw amino-acid sequence, 708 residues long: Kin of IRRE-like protein 2 (708 aa).

Residues 1-20 (MLRMRVPALLVLLFCFRGRA) form the signal peptide. Residues 21–510 (GPSPHFLQQP…GRRDLLPTVR (490 aa)) lie on the Extracellular side of the membrane. Ig-like C2-type domains follow at residues 24 to 118 (PHFL…AQLH), 123 to 222 (PEAP…ITLS), 227 to 307 (PEVT…TALD), 312 to 394 (PILQ…ARLT), and 398 to 501 (PPVV…ASLG). Cys-45 and Cys-103 are joined by a disulfide. A glycan (N-linked (GlcNAc...) asparagine) is linked at Asn-143. 2 cysteine pairs are disulfide-bonded: Cys-146–Cys-204 and Cys-248–Cys-291. A Cell attachment site motif is present at residues 149 to 151 (RGD). N-linked (GlcNAc...) asparagine glycosylation occurs at Asn-301. Intrachain disulfides connect Cys-333–Cys-375 and Cys-419–Cys-485. Residue Asn-484 is glycosylated (N-linked (GlcNAc...) asparagine). Residues 511-531 (IVAGVAAATTTLLMVITGVAL) form a helical membrane-spanning segment. The Cytoplasmic portion of the chain corresponds to 532 to 708 (CCWRHSKASA…PSHPRLQTHV (177 aa)). The segment at 545–601 (EQKNLMRIPGSSDGSSSRGPEEEETGSREDRGPIVHTDHSDLVLEEEGTLETKDPTN) is disordered. Residues 553–562 (PGSSDGSSSR) show a composition bias toward low complexity. The span at 569–586 (TGSREDRGPIVHTDHSDL) shows a compositional bias: basic and acidic residues. At Ser-571 the chain carries Phosphoserine. Phosphotyrosine is present on residues Tyr-603, Tyr-604, and Tyr-661. The interval 684-708 (LAPGTPPFPYAAFPTPSHPRLQTHV) is disordered.

This sequence belongs to the immunoglobulin superfamily. As to quaternary structure, homodimer. Interacts with NPHS2/podocin (via the C-terminus). Interacts with NPHS1 (via the Ig-like domains). Interacts with FYN. N-glycosylated. Post-translationally, the extracellular domain is cleaved leading to the generation of a soluble fragment and a membrane-bound C-terminal fragment, which is further cleaved by gamma-secretase. Highly expressed in beta-cells of the pancreatic islets.

The protein resides in the cell membrane. May regulate basal insulin secretion. In Homo sapiens (Human), this protein is Kin of IRRE-like protein 2 (KIRREL2).